The chain runs to 244 residues: Glutathione S-transferase theta-2 (244 aa).

Residues G2–D82 enclose the GST N-terminal domain. Glutathione-binding positions include H40–L41, K53–V54, E66–S67, and D104–R107. Residues D88–P230 form the GST C-terminal domain.

Belongs to the GST superfamily. Theta family. In terms of assembly, homodimer. Highest values found in liver followed by testis, adrenal gland, kidney, lung, brain and skeletal muscle. In liver, highest expression found in central vein limiting plate hepatocytes. In lung, expressed mainly in club cells of the bronchiolar epithelium and, at low levels, in type II alveolar cells.

Its subcellular location is the cytoplasm. The protein localises to the cytosol. The protein resides in the nucleus. It catalyses the reaction RX + glutathione = an S-substituted glutathione + a halide anion + H(+). Functionally, catalyzes the inactivation of reactive sulfate esters in carcinogenic arylmethanols. Highest activity towards ethacrynic acid and cumene hydroperoxide. The protein is Glutathione S-transferase theta-2 (Gstt2) of Rattus norvegicus (Rat).